The following is a 392-amino-acid chain: Phosphoglycerate kinase (392 aa).

Substrate-binding positions include 19–21 (DFN), R35, 58–61 (HMGR), R117, and R150. Residues K201, E323, and 349–352 (GGDS) each bind ATP.

Belongs to the phosphoglycerate kinase family. Monomer.

It is found in the cytoplasm. It catalyses the reaction (2R)-3-phosphoglycerate + ATP = (2R)-3-phospho-glyceroyl phosphate + ADP. It functions in the pathway carbohydrate degradation; glycolysis; pyruvate from D-glyceraldehyde 3-phosphate: step 2/5. This is Phosphoglycerate kinase from Desulfotalea psychrophila (strain LSv54 / DSM 12343).